We begin with the raw amino-acid sequence, 994 residues long: Chloride channel protein 1 (994 aa).

Residues 1 to 118 lie on the Cytoplasmic side of the membrane; the sequence is MERSQSQQHG…VLRRKLGEDW (118 aa). Residues 37-61 are disordered; that stretch reads SENGGLQHRPRKDLGPRHNAHPTQI. Residues 119–150 traverse the membrane as a helical segment; the sequence is IFLVLLGLLMALVSWCMDYVSAKSLQAYKWTY. Residues 151-158 are Extracellular-facing; sequence AQMQPSLP. A helical membrane pass occupies residues 159–179; the sequence is LQYLAWVTFPLILILFSALFC. At 180–183 the chain is on the cytoplasmic side; it reads QLIS. The segment at residues 184 to 189 is an intramembrane region (note=Loop between two helices); sequence PQAVGS. The short motif at 188-192 is the Selectivity filter part_1 element; sequence GSGIP. Ser-189 lines the chloride pocket. Positions 190–195 form an intramembrane region, helical; sequence GIPEMK. Residues 196–208 lie on the Cytoplasmic side of the membrane; sequence TILRGVVLKEYLT. The segment at residues 209–224 is an intramembrane region (helical); sequence LKAFVAKVVALTAGLG. Positions 225 to 230 form an intramembrane region, note=Loop between two helices; it reads SGIPVG. Residues 230–234 carry the Selectivity filter part_2 motif; that stretch reads GKEGP. Residues 231-246 constitute an intramembrane region (helical); the sequence is KEGPFVHIASICAAVL. At 247–268 the chain is on the cytoplasmic side; that stretch reads SKFMSMFSGVYEQPYYYTDILT. Intramembrane regions (helical) lie at residues 269-280 and 281-290; these read VGCAVGVGCCFG and TPLGGVLFSI. Residues 291–301 lie on the Cytoplasmic side of the membrane; sequence EVTSTYFAVRN. Residues 302-321 traverse the membrane as a helical segment; sequence YWRGFFAATFSAFVFRVLAV. The Extracellular segment spans residues 322–347; that stretch reads WNKDAVTITALFRTNFRMDFPFDLKE. The chain crosses the membrane as a helical span at residues 348–376; sequence LPAFAVIGICCGFLGAVFVYLHRQVMLGV. Residues 377–390 lie on the Cytoplasmic side of the membrane; it reads RKHKALSQFLAKHR. Residues 391 to 408 form a helical membrane-spanning segment; it reads LLYPGIVTFVIASLTFPP. The Extracellular portion of the chain corresponds to 409–414; that stretch reads GMGQFM. The note=Loop between two helices intramembrane region spans 415–418; sequence AGEL. An intramembrane region (helical) is located at residues 419–426; sequence MPREAIST. Residues 427-457 are Extracellular-facing; sequence LFDNNTWVKHIGDPKSLGQSAVWIHPQVNVV. The segment at residues 458-475 is an intramembrane region (helical); it reads IIILLFFVMKFWMSIVAT. The segment at residues 476-482 is an intramembrane region (note=Loop between two helices); the sequence is TMPIPCG. Positions 482–486 match the Selectivity filter part_3 motif; the sequence is GGFMP. Residues 483–498 constitute an intramembrane region (helical); the sequence is GFMPVFVLGAAFGRLV. Phe-484 provides a ligand contact to chloride. Residues 499–521 lie on the Extracellular side of the membrane; it reads GEIMAMLFPEGILFDDIIYKILP. The helical intramembrane region spans 522–538; it reads GGYAVIGAAALTGAVSH. Residues 539–540 constitute an intramembrane region (note=Loop between two helices); the sequence is TV. The segment at residues 541–554 is an intramembrane region (helical); sequence STAVICFELTGQIA. The Extracellular portion of the chain corresponds to 555-557; the sequence is HIL. Residues 558–571 constitute an intramembrane region (helical); sequence PMMVAVILANMVAQ. An intramembrane region (note=Loop between two helices) is located at residues 572-575; that stretch reads SLQP. Residues 576-578 constitute an intramembrane region (helical); the sequence is SLY. Tyr-578 contributes to the chloride binding site. Over 579-994 the chain is Cytoplasmic; it reads DSIIQVKKLP…DEEDEDELIL (416 aa). A CBS 1 domain is found at 609–668; the sequence is MVRDVKFVSASCTYGELRNLLQTTTVKTLPLVDSKDSMILLGSVERSELQSLLQRHLCAE. Disordered regions lie at residues 710–769, 880–923, and 965–994; these read EDED…SADQ, TKSG…DGAP, and NLGPEEDLADILHGPSLRSTDEEDEDELIL. The span at 725-741 shows a compositional bias: pro residues; it reads TPTPPPPPPPPLPPQFP. Residues 827 to 882 enclose the CBS 2 domain; sequence IDQSPFQLVEQTTLHKTHTLFSLLGLHLAYVTSMGKLRGVLALEELQKAIKGHTKS. Ser-892 is subject to Phosphoserine. Over residues 985 to 994 the composition is skewed to acidic residues; sequence DEEDEDELIL.

The protein belongs to the chloride channel (TC 2.A.49) family. ClC-1/CLCN1 subfamily. As to quaternary structure, homodimer. Predominantly expressed in skeletal muscles.

The protein resides in the cell membrane. The protein localises to the sarcolemma. It is found in the T-tubule. It catalyses the reaction chloride(in) = chloride(out). The catalysed reaction is bromide(in) = bromide(out). The enzyme catalyses iodide(out) = iodide(in). It carries out the reaction thiocyanate(in) = thiocyanate(out). It catalyses the reaction nitrate(in) = nitrate(out). Its activity is regulated as follows. Modulated by membrane voltage with depolarization favouring channel opening and hyperpolarization favouring channel closure. Inhibited by acidic pH and ATP binding due to a shift of voltage dependence of common gating to more positive voltages. Inhibited by 9-anthracene-carboxylic acid. Voltage-gated chloride channel involved in skeletal muscle excitability. Generates most of the plasma membrane chloride conductance in skeletal muscle fibers, stabilizes the resting membrane potential and contributes to the repolarization phase during action potential firing. Forms a homodimeric channel where each subunit has its own ion conduction pathway. Conducts double-barreled currents controlled by two types of gates, two fast glutamate gates that control each subunit independently and a slow common gate that opens and shuts off both subunits simultaneously. Has a significant open probability at muscle resting potential and is further activated upon membrane depolarization. Permeable to small monovalent anions with ion selectivity for chloride &gt; thiocyanate &gt; bromide &gt; nitrate &gt; iodide. This chain is Chloride channel protein 1 (Clcn1), found in Rattus norvegicus (Rat).